Consider the following 314-residue polypeptide: S-methyl-5'-thioadenosine phosphorylase (314 aa).

Phosphate is bound by residues Ser-31, 73–74, and 106–107; these read RH and SA. Met-207 contributes to the substrate binding site. Thr-208 provides a ligand contact to phosphate. Substrate is bound at residue 231–233; it reads DYD.

The protein belongs to the PNP/MTAP phosphorylase family. MTAP subfamily. In terms of assembly, homohexamer. Dimer of a homotrimer.

It catalyses the reaction S-methyl-5'-thioadenosine + phosphate = 5-(methylsulfanyl)-alpha-D-ribose 1-phosphate + adenine. The protein operates within amino-acid biosynthesis; L-methionine biosynthesis via salvage pathway; S-methyl-5-thio-alpha-D-ribose 1-phosphate from S-methyl-5'-thioadenosine (phosphorylase route): step 1/1. Its function is as follows. Catalyzes the reversible phosphorylation of S-methyl-5'-thioadenosine (MTA) to adenine and 5-methylthioribose-1-phosphate. Involved in the breakdown of MTA, a major by-product of polyamine biosynthesis. Responsible for the first step in the methionine salvage pathway after MTA has been generated from S-adenosylmethionine. Has broad substrate specificity with 6-aminopurine nucleosides as preferred substrates. The sequence is that of S-methyl-5'-thioadenosine phosphorylase from Prochlorococcus marinus (strain SARG / CCMP1375 / SS120).